A 197-amino-acid polypeptide reads, in one-letter code: MSRIGRVERATNETKVFVEVNLDGTGAADISTGVGFYDHMLHQIAKHGLFDLTVRTEGDLHIDAHHTMEDTALALGAAFREALGDRSGIRRFADAKVPLDEALAEVTVDISGRPYLVHSEPEGMAPMIGRDYDTTMTRHIFESFVAQARITLHVHVPYGRIPHHIVECQFKAVARALRSACERDPRVTGVPSTKGTL.

Belongs to the imidazoleglycerol-phosphate dehydratase family.

It localises to the cytoplasm. The enzyme catalyses D-erythro-1-(imidazol-4-yl)glycerol 3-phosphate = 3-(imidazol-4-yl)-2-oxopropyl phosphate + H2O. It functions in the pathway amino-acid biosynthesis; L-histidine biosynthesis; L-histidine from 5-phospho-alpha-D-ribose 1-diphosphate: step 6/9. This chain is Imidazoleglycerol-phosphate dehydratase, found in Thermobifida fusca (strain YX).